The primary structure comprises 225 residues: Putative ankyrin repeat protein RBE_1025 (225 aa).

ANK repeat units lie at residues 6-35 (LSKD…AINP), 41-71 (NGKT…NVNI), 75-120 (TGFT…DVNI), and 124-153 (KGNT…SPFI).

The polypeptide is Putative ankyrin repeat protein RBE_1025 (Rickettsia bellii (strain RML369-C)).